The primary structure comprises 475 residues: Sulfate adenylyltransferase subunit 1 (475 aa).

In terms of domain architecture, tr-type G spans 24-240 (KSLLRFLTCG…ESAEVERELE (217 aa)). Residues 33-40 (GSVDDGKS) form a G1 region. A GTP-binding site is contributed by 33 to 40 (GSVDDGKS). Residues 91 to 95 (GITID) are G2. The tract at residues 112–115 (DTPG) is G3. GTP contacts are provided by residues 112 to 116 (DTPGH) and 167 to 170 (NKMD). Residues 167–170 (NKMD) form a G4 region. A G5 region spans residues 204–206 (SAL).

This sequence belongs to the TRAFAC class translation factor GTPase superfamily. Classic translation factor GTPase family. CysN/NodQ subfamily. In terms of assembly, heterodimer composed of CysD, the smaller subunit, and CysN.

It catalyses the reaction sulfate + ATP + H(+) = adenosine 5'-phosphosulfate + diphosphate. Its pathway is sulfur metabolism; hydrogen sulfide biosynthesis; sulfite from sulfate: step 1/3. Functionally, with CysD forms the ATP sulfurylase (ATPS) that catalyzes the adenylation of sulfate producing adenosine 5'-phosphosulfate (APS) and diphosphate, the first enzymatic step in sulfur assimilation pathway. APS synthesis involves the formation of a high-energy phosphoric-sulfuric acid anhydride bond driven by GTP hydrolysis by CysN coupled to ATP hydrolysis by CysD. This Aeromonas hydrophila subsp. hydrophila (strain ATCC 7966 / DSM 30187 / BCRC 13018 / CCUG 14551 / JCM 1027 / KCTC 2358 / NCIMB 9240 / NCTC 8049) protein is Sulfate adenylyltransferase subunit 1.